Here is a 252-residue protein sequence, read N- to C-terminus: C4b-binding protein beta chain (252 aa).

The first 17 residues, 1–17 (MFFWCACCLMVAWRVSA), serve as a signal peptide directing secretion. Sushi domains follow at residues 21-78 (EHCP…ECRL), 79-136 (GHCP…ICKS), and 137-193 (RDCD…VCKL). Cystine bridges form between Cys23-Cys63, Cys49-Cys76, Cys81-Cys121, Cys107-Cys134, Cys139-Cys179, and Cys165-Cys191. N-linked (GlcNAc...) asparagine glycosylation is found at Asn64, Asn71, Asn98, Asn117, and Asn154.

Disulfide-linked complex of alpha and beta chains of 3 possible sorts: a 570 kDa complex of 7 alpha chains and 1 beta chain, a 530 kDa homoheptamer of alpha chains or a 500 kDa complex of 6 alpha chains and 1 beta chain. The central body of the alpha chain homomer supports tentacles, each with the binding site for C4b at the end.

The protein resides in the secreted. Controls the classical pathway of complement activation. It binds as a cofactor to C3b/C4b inactivator (C3bINA), which then hydrolyzes the complement fragment C4b. It also accelerates the degradation of the C4bC2a complex (C3 convertase) by dissociating the complement fragment C2a. It also interacts with anticoagulant protein S and with serum amyloid P component. The beta chain binds protein S. This chain is C4b-binding protein beta chain (C4BPB), found in Homo sapiens (Human).